The sequence spans 526 residues: GMP synthase [glutamine-hydrolyzing] (526 aa).

Positions 9 to 208 (RILILDFGSQ…VKDICGCECL (200 aa)) constitute a Glutamine amidotransferase type-1 domain. Catalysis depends on C86, which acts as the Nucleophile. Catalysis depends on residues H182 and E184. Residues 209–401 (WTPATIIDDA…LGLPYDMLYR (193 aa)) form the GMPS ATP-PPase domain. 236–242 (SGGVDSS) provides a ligand contact to ATP.

As to quaternary structure, homodimer.

It catalyses the reaction XMP + L-glutamine + ATP + H2O = GMP + L-glutamate + AMP + diphosphate + 2 H(+). The protein operates within purine metabolism; GMP biosynthesis; GMP from XMP (L-Gln route): step 1/1. In terms of biological role, catalyzes the synthesis of GMP from XMP. The polypeptide is GMP synthase [glutamine-hydrolyzing] (Aeromonas salmonicida (strain A449)).